A 607-amino-acid chain; its full sequence is Elongation factor 4 (607 aa).

Positions Ser-11–Ala-193 constitute a tr-type G domain. GTP-binding positions include Asp-23 to Thr-28 and Asn-140 to Asp-143.

Belongs to the TRAFAC class translation factor GTPase superfamily. Classic translation factor GTPase family. LepA subfamily.

It is found in the cell membrane. It carries out the reaction GTP + H2O = GDP + phosphate + H(+). In terms of biological role, required for accurate and efficient protein synthesis under certain stress conditions. May act as a fidelity factor of the translation reaction, by catalyzing a one-codon backward translocation of tRNAs on improperly translocated ribosomes. Back-translocation proceeds from a post-translocation (POST) complex to a pre-translocation (PRE) complex, thus giving elongation factor G a second chance to translocate the tRNAs correctly. Binds to ribosomes in a GTP-dependent manner. The sequence is that of Elongation factor 4 from Bacillus cereus (strain B4264).